A 116-amino-acid chain; its full sequence is Ribosome-binding factor A (116 aa).

Belongs to the RbfA family. As to quaternary structure, monomer. Binds 30S ribosomal subunits, but not 50S ribosomal subunits or 70S ribosomes.

It is found in the cytoplasm. One of several proteins that assist in the late maturation steps of the functional core of the 30S ribosomal subunit. Associates with free 30S ribosomal subunits (but not with 30S subunits that are part of 70S ribosomes or polysomes). Required for efficient processing of 16S rRNA. May interact with the 5'-terminal helix region of 16S rRNA. The polypeptide is Ribosome-binding factor A (Clostridium botulinum (strain Eklund 17B / Type B)).